The sequence spans 114 residues: uncharacterized protein (114 aa).

Residue G2 is the site of N-myristoyl glycine; by host attachment. A run of 2 helical transmembrane segments spans residues 11–31 (FGLILVGAIIFTASYLWKDLL) and 44–64 (GLMWRSIYTILVTVILVLVAI). The segment at 73-114 (VNKDSKDPKDKSIEFDDSPIRDGSSGTPDNSNEPTDLSVETS) is disordered. Basic and acidic residues predominate over residues 75-92 (KDSKDPKDKSIEFDDSPI). Residues 96–114 (SSGTPDNSNEPTDLSVETS) are compositionally biased toward polar residues.

It is found in the membrane. This is an uncharacterized protein from Acanthamoeba polyphaga (Amoeba).